Reading from the N-terminus, the 319-residue chain is Protein SICKLE (319 aa).

3 disordered regions span residues 1–59, 71–239, and 262–299; these read MEDS…TQRF, SFKK…PGAE, and CSDA…SNQQ. Polar residues-rich tracts occupy residues 27–56 and 78–88; these read TTGT…SFET and PKQQYISSPSH. A compositionally biased stretch (pro residues) spans 93 to 103; that stretch reads PVPPQFPPSVP. The segment covering 185-210 has biased composition (polar residues); it reads SYNNTPPQFSNYGRQNANWGGNTYPN. The segment covering 228-238 has biased composition (basic and acidic residues); the sequence is DGGRRPMEPGA. The segment covering 285–299 has biased composition (polar residues); it reads SVTSEATHKTSSNQQ.

In terms of assembly, interacts with ubiquitin thioesterases UBP12 and UBP13, and with protein phosphatase 2A subunits PP2AB1, PP2AB2, PP2A3, PP2A4, PP2AA1 and PP2AA2. Expressed in the shoot apical meristem (SAM), embryos, seedlings, root tips, and root and leaf primordia.

The protein localises to the nucleus. Its subcellular location is the cytoplasm. The protein resides in the cytosol. Involved in miRNAs and siRNAs biogenesis and thus promotes gene silencing. Modulates auxin (IAA) transport-related developmental programs by regulating protein phosphatase 2A (PP2As)-driven auxin efflux carrier PIN proteins recycling and polarity. Required during development. Necessary for abiotic stress (e.g. chilling and salt) tolerance. This chain is Protein SICKLE, found in Arabidopsis thaliana (Mouse-ear cress).